The sequence spans 198 residues: Twist-related protein 1 (198 aa).

A compositionally biased stretch (low complexity) spans 1–18 (MMQDVSSSPVSPADDSLS). Positions 1 to 101 (MMQDVSSSPV…GGGSPQSYEE (101 aa)) are disordered. Positions 34-43 (RGGRKRRSSR) are enriched in basic residues. Composition is skewed to gly residues over residues 46–64 (AGGG…GGDE) and 79–95 (GCGG…GGGS). The region spanning 104 to 155 (TQRVMANVRERQRTQSLNEAFAALRKIIPTLPSDKLSKIQTLKLAARYIDFL) is the bHLH domain. The interval 157–187 (QVLQSDELDSKMASCSYVAHERLSYAFSVWR) is sufficient for transactivation activity.

Efficient DNA binding requires dimerization with another bHLH protein. Homodimer or heterodimer with E proteins such as TCF3. ID1 binds preferentially to TCF3 but does not interact efficiently with TWIST1 so ID1 levels control the amount of TCF3 available to dimerize with TWIST and thus determine the type of dimer formed.

The protein resides in the nucleus. Its function is as follows. Acts as a transcriptional regulator. Inhibits myogenesis by sequestrating E proteins, inhibiting trans-activation by MEF2, and inhibiting DNA-binding by MYOD1 through physical interaction. This interaction probably involves the basic domains of both proteins. Also represses expression of pro-inflammatory cytokines such as TNFA and IL1B. Regulates cranial suture patterning and fusion. Activates transcription as a heterodimer with E proteins. Regulates gene expression differentially, depending on dimer composition. Homodimers induce expression of FGFR2 and POSTN while heterodimers repress FGFR2 and POSTN expression and induce THBS1 expression. Heterodimerization is also required for osteoblast differentiation. Represses the activity of the circadian transcriptional activator: NPAS2-BMAL1 heterodimer. This is Twist-related protein 1 (TWIST1) from Eulemur fulvus fulvus (Brown lemur).